The sequence spans 61 residues: Conotoxin Vn5.3 (61 aa).

A signal peptide spans 1–19; the sequence is MHCLPVFVILLLLIASAPG. A propeptide spanning residues 20–50 is cleaved from the precursor; the sequence is VDVQPKTKNFMTRASLRDFAKKTPKRLSKLR.

It belongs to the conotoxin T superfamily. Post-translationally, contains 2 disulfide bonds that can be either 'C1-C3, C2-C4' or 'C1-C4, C2-C3', since these disulfide connectivities have been observed for conotoxins with cysteine framework V (for examples, see AC P0DQQ7 and AC P81755). Expressed by the venom duct.

The protein resides in the secreted. The protein is Conotoxin Vn5.3 of Conus ventricosus (Mediterranean cone).